A 333-amino-acid polypeptide reads, in one-letter code: Biotin synthase (333 aa).

Positions 47–276 constitute a Radical SAM core domain; sequence YYGKKVKLNM…TKEIRISGGR (230 aa). Positions 65, 69, and 72 each coordinate [4Fe-4S] cluster. [2Fe-2S] cluster is bound by residues cysteine 109, cysteine 141, cysteine 201, and arginine 271.

Belongs to the radical SAM superfamily. Biotin synthase family. In terms of assembly, homodimer. [4Fe-4S] cluster is required as a cofactor. The cofactor is [2Fe-2S] cluster.

It carries out the reaction (4R,5S)-dethiobiotin + (sulfur carrier)-SH + 2 reduced [2Fe-2S]-[ferredoxin] + 2 S-adenosyl-L-methionine = (sulfur carrier)-H + biotin + 2 5'-deoxyadenosine + 2 L-methionine + 2 oxidized [2Fe-2S]-[ferredoxin]. Its pathway is cofactor biosynthesis; biotin biosynthesis; biotin from 7,8-diaminononanoate: step 2/2. Its function is as follows. Catalyzes the conversion of dethiobiotin (DTB) to biotin by the insertion of a sulfur atom into dethiobiotin via a radical-based mechanism. In Bacillus licheniformis (strain ATCC 14580 / DSM 13 / JCM 2505 / CCUG 7422 / NBRC 12200 / NCIMB 9375 / NCTC 10341 / NRRL NRS-1264 / Gibson 46), this protein is Biotin synthase.